The chain runs to 220 residues: U1 small nuclear ribonucleoprotein C (220 aa).

The Matrin-type zinc-finger motif lies at 4–36 (FFCDYCDVYLTHDSISVRKAHNSGRNHLRNVVD). The disordered stretch occupies residues 197–220 (PLGGFPAGAPLPGAPPGYGPPGAK). The span at 208–220 (PGAPPGYGPPGAK) shows a compositional bias: pro residues.

The protein belongs to the U1 small nuclear ribonucleoprotein C family. In terms of assembly, U1 snRNP is composed of the 7 core Sm proteins B/B', D1, D2, D3, E, F and G that assemble in a heptameric protein ring on the Sm site of the small nuclear RNA to form the core snRNP, and at least 3 U1 snRNP-specific proteins U1-70K, U1-A and U1-C. U1-C interacts with U1 snRNA and the 5' splice-site region of the pre-mRNA.

It localises to the nucleus. Functionally, component of the spliceosomal U1 snRNP, which is essential for recognition of the pre-mRNA 5' splice-site and the subsequent assembly of the spliceosome. U1-C is directly involved in initial 5' splice-site recognition for both constitutive and regulated alternative splicing. The interaction with the 5' splice-site seems to precede base-pairing between the pre-mRNA and the U1 snRNA. Stimulates commitment or early (E) complex formation by stabilizing the base pairing of the 5' end of the U1 snRNA and the 5' splice-site region. The protein is U1 small nuclear ribonucleoprotein C of Tuber melanosporum (strain Mel28) (Perigord black truffle).